The sequence spans 215 residues: MREELVWIDCEMTGLDLGPDKLIEIAALVTDADLNILGDGVDVVIHADDAALSSMVDVVADMHSRSGLTEEVRASTVDMATAEAMVLDYIGEHVKQPKTAPLAGNSIATDRSFIARDMPALDAFLHYRMIDVSSIKELCRRWYPRIYFGQPPKGLAHRALADIHESIRELQYYRRTAFVPQPGPTTSEITAVVADLQGVDDAPEATDSAQERPSG.

The 166-residue stretch at 5–170 (LVWIDCEMTG…ADIHESIREL (166 aa)) folds into the Exonuclease domain. Residue Tyr-127 is part of the active site.

The protein belongs to the oligoribonuclease family.

The protein resides in the cytoplasm. Functionally, 3'-to-5' exoribonuclease specific for small oligoribonucleotides. This is Oligoribonuclease from Mycobacterium ulcerans (strain Agy99).